The primary structure comprises 204 residues: MGAVTDDEVIRKRLLIDGDGAGDDRRINLLVKSFIKWCNSGSQEEGYSQYQRMLSTLSQCEFSMGKTLLVYDMNLREMENYEKIYKEIECSIAGAHEKIAECKKQILQAKRIRKNRQEYDALAKVIQHHPDRHETLKELEALGKELEHLSHIKESVEDKLELRRKQFHVLLSTIHELQQTLENDDKLSEVDEAQESTMEADPKP.

N-acetylglycine is present on glycine 2. Threonine 5 carries the phosphothreonine modification. Lysine 36 carries the N6-acetyllysine modification. The interaction with THOC5 stretch occupies residues 50-137 (YQRMLSTLSQ…HHPDRHETLK (88 aa)). Residues 105-204 (QILQAKRIRK…ESTMEADPKP (100 aa)) are interaction with NIF3L1. Residues 146 to 204 (LEHLSHIKESVEDKLELRRKQFHVLLSTIHELQQTLENDDKLSEVDEAQESTMEADPKP) are a coiled coil. The tract at residues 182-204 (ENDDKLSEVDEAQESTMEADPKP) is disordered.

It belongs to the THOC7 family. As to quaternary structure, tetramer; as part of a THO-DDX39B complex. Component of the THO subcomplex, which is composed of THOC1, THOC2, THOC3, THOC5, THOC6 and THOC7. Component of the transcription/export (TREX) complex at least composed of ALYREF/THOC4, DDX39B, SARNP/CIP29, CHTOP and the THO subcomplex; in the complex interacts with THOC1, THOC2 and THOC5; forms a coiled-coil dimer with THOC5; together with THOC5 and THOC6, plays a key structural role in the oligomerization of the THO-DDX39B complex. TREX seems to have a dynamic structure involving ATP-dependent remodeling. Interacts with NIF3L1. Ubiquitously expressed.

It localises to the cytoplasm. It is found in the nucleus. The protein localises to the nucleus speckle. In terms of biological role, component of the THO subcomplex of the TREX complex which is thought to couple mRNA transcription, processing and nuclear export, and which specifically associates with spliced mRNA and not with unspliced pre-mRNA. Required for efficient export of polyadenylated RNA. Plays a key structural role in the oligomerization of the THO-DDX39B complex. TREX is recruited to spliced mRNAs by a transcription-independent mechanism, binds to mRNA upstream of the exon-junction complex (EJC) and is recruited in a splicing- and cap-dependent manner to a region near the 5' end of the mRNA where it functions in mRNA export to the cytoplasm via the TAP/NXF1 pathway. The polypeptide is THO complex subunit 7 homolog (Thoc7) (Mus musculus (Mouse)).